The primary structure comprises 248 residues: Ubiquinone biosynthesis O-methyltransferase (248 aa).

Residues R41, G72, D93, and M136 each contribute to the S-adenosyl-L-methionine site.

It belongs to the methyltransferase superfamily. UbiG/COQ3 family.

The enzyme catalyses a 3-demethylubiquinol + S-adenosyl-L-methionine = a ubiquinol + S-adenosyl-L-homocysteine + H(+). The catalysed reaction is a 3-(all-trans-polyprenyl)benzene-1,2-diol + S-adenosyl-L-methionine = a 2-methoxy-6-(all-trans-polyprenyl)phenol + S-adenosyl-L-homocysteine + H(+). The protein operates within cofactor biosynthesis; ubiquinone biosynthesis. In terms of biological role, O-methyltransferase that catalyzes the 2 O-methylation steps in the ubiquinone biosynthetic pathway. This chain is Ubiquinone biosynthesis O-methyltransferase, found in Rhizobium rhizogenes (strain K84 / ATCC BAA-868) (Agrobacterium radiobacter).